The sequence spans 247 residues: Spermatogenesis-associated protein 46 (247 aa).

The interval 125-164 is disordered; it reads QRDSCLPEDTADSVCSSSPSPENTCPREATKKSRPGPDTT. Polar residues predominate over residues 137–147; sequence SVCSSSPSPEN.

It localises to the nucleus membrane. Its function is as follows. Plays a role in spermiogenesis and fertilization. The polypeptide is Spermatogenesis-associated protein 46 (SPATA46) (Bos taurus (Bovine)).